The chain runs to 269 residues: Hydroxyethylthiazole kinase (269 aa).

Substrate is bound at residue Met-42. ATP-binding residues include Arg-118 and Ser-164. Residue Gly-191 participates in substrate binding.

This sequence belongs to the Thz kinase family. Mg(2+) is required as a cofactor.

The enzyme catalyses 5-(2-hydroxyethyl)-4-methylthiazole + ATP = 4-methyl-5-(2-phosphooxyethyl)-thiazole + ADP + H(+). The protein operates within cofactor biosynthesis; thiamine diphosphate biosynthesis; 4-methyl-5-(2-phosphoethyl)-thiazole from 5-(2-hydroxyethyl)-4-methylthiazole: step 1/1. Catalyzes the phosphorylation of the hydroxyl group of 4-methyl-5-beta-hydroxyethylthiazole (THZ). The chain is Hydroxyethylthiazole kinase from Listeria monocytogenes serotype 4b (strain F2365).